A 260-amino-acid chain; its full sequence is MILDQLVQASQQRVQKVPVRERVKRIQQARKMTTPVLSFEAMLAQPGLQLIGEVKRASPSKGLIAAEFDYLQIAQDYVAAGIDAISVLTEPRYFKGQLSYLQAITQTVSVPTLRKDFIVAASQIASARIAGASAVLLIVAILTPVQLQAFITLAHELNLSALVEVHTTAESKQAVAAGARIIGINNRNLKDFSVNFATSCQLRQAVPAECYVVAESGIQTATQAQQLAAAGFDAMLVGETLMRAPDKGQAVMQLRAGVRG.

The protein belongs to the TrpC family.

It catalyses the reaction 1-(2-carboxyphenylamino)-1-deoxy-D-ribulose 5-phosphate + H(+) = (1S,2R)-1-C-(indol-3-yl)glycerol 3-phosphate + CO2 + H2O. It participates in amino-acid biosynthesis; L-tryptophan biosynthesis; L-tryptophan from chorismate: step 4/5. This Lactiplantibacillus plantarum (strain ATCC BAA-793 / NCIMB 8826 / WCFS1) (Lactobacillus plantarum) protein is Indole-3-glycerol phosphate synthase.